The primary structure comprises 810 residues: MPIPFKPVLAVAAIAQAFPAFAADPAPQSAQTLNEITVTGTHKTQKLGEEKIRRKTLDKLLVNDEHDLVRYDPGISVVEGGRAGSNGFTIRGVDKDRVAINVDGLAQAESRSSEAFQELFGAYGNFNANRNTSEPENFSEVTITKGADSLKSGSGALGGAVNYQTKSASDYVSEDKPYHLGIKGGSVGKNSQKFSSITAAGRLFGLDALLVYTRRFGKETKNRSTEGNVEIKNDGYVYNPTDTGGPSKYLTYVATGVARSQPDPQEWVNKSTLFKLGYNFNDQNRIGWIFEDSRTDRFTNELSNLWTGTTTSAATGDYRHRQDVSYRRRSGVEYKNELEHGPWDSLKLRYDKQRIDMNTWTWDIPKNYDLRGINSEVYHSFRHIRQNTAQWTADFEKQLDFSKAVWAAQYGLGGGRGDNANSDYSYFVKLYDPKILTSNQAKITMLIENRSKYKFAYWNNVFHLGGNDRFRLNAGIRYDKNSSSAKDDPKYTTAIRGQIPHLGSERAHAGFSYGTGFDWRFTKHLHLLAKYSTGFRAPTSDETWLLFPHPDFYLKANPNLKAEKAKNWELGLAGSGKAGNFKLSGFKTKYRDFIELTYMGVSSDNPNKPTYAPLSDGTALVSSPVWQNQNRSSAWVKGLEFNGTWNLDSIGLPQGTHAGVNVSYIKGKAKQTNGQETPINALSPWSAVYNLGYDAPSKRWGINAYATRTAAKKPSDTVHSNDDLNNPWPYAKHSKAYTLFDLSAYLNIGKQVTLRAAAYNITNKQYYTWESLRSIREFGTVNRVDNKTHAGIQRFTSPGRSYNFTIEAKF.

An N-terminal signal peptide occupies residues 1–22 (MPIPFKPVLAVAAIAQAFPAFA). In terms of domain architecture, TBDR plug spans 34–166 (NEITVTGTHK…LGGAVNYQTK (133 aa)). The 636-residue stretch at 175-810 (DKPYHLGIKG…SYNFTIEAKF (636 aa)) folds into the TBDR beta-barrel domain. A TonB C-terminal box motif is present at residues 793 to 810 (QRFTSPGRSYNFTIEAKF).

This sequence belongs to the TonB-dependent receptor family.

Its subcellular location is the cell outer membrane. Functionally, acts as a receptor for hemoglobin or the hemoglobin/haptoglobin complex and is required for heme uptake. This chain is Hemoglobin-haptoglobin utilization protein B (hpuB), found in Neisseria meningitidis serogroup C.